A 475-amino-acid polypeptide reads, in one-letter code: UDP-N-acetylmuramate--L-alanine ligase (475 aa).

125–131 (GTHGKTT) is an ATP binding site.

This sequence belongs to the MurCDEF family.

It is found in the cytoplasm. The catalysed reaction is UDP-N-acetyl-alpha-D-muramate + L-alanine + ATP = UDP-N-acetyl-alpha-D-muramoyl-L-alanine + ADP + phosphate + H(+). Its pathway is cell wall biogenesis; peptidoglycan biosynthesis. Functionally, cell wall formation. This chain is UDP-N-acetylmuramate--L-alanine ligase, found in Haemophilus influenzae (strain 86-028NP).